The following is a 187-amino-acid chain: Preprocaerulein clone PXC202 (187 aa).

A propeptide spanning residues 1–9 (NDERRFADG) is cleaved from the precursor. Positions 1 to 21 (NDERRFADGQQDYTGWMDFGR) are disordered. Tyrosine 13 is modified (sulfotyrosine). Phenylalanine 19 carries the phenylalanine amide modification. A propeptide spanning residues 23 to 73 (DDEDDVNERDVRGFGSFLGKALKAALKIGANALGGSPQQREANDERRFADG) is cleaved from the precursor. Tyrosine 77 is subject to Sulfotyrosine. The residue at position 83 (phenylalanine 83) is a Phenylalanine amide. Positions 87-137 (DDEDDVNERDVRGFGSFLGKALKAALKIGANALGGSLQQREVNDERRFADG) are excised as a propeptide. Position 141 is a sulfotyrosine (tyrosine 141). Phenylalanine 147 carries the phenylalanine amide modification. The propeptide occupies 151-152 (DG). Tyrosine 156 bears the Sulfotyrosine mark. Phenylalanine 162 bears the Phenylalanine amide mark. The propeptide occupies 166–187 (DDEDDVHERDVRGFGSFLGKAL).

This sequence belongs to the gastrin/cholecystokinin family. Expressed by the skin glands.

The protein resides in the secreted. Functionally, the pharmacological activities of caerulein are quite similar to the physiological activities of gastrin and related peptides. The polypeptide is Preprocaerulein clone PXC202 (Xenopus laevis (African clawed frog)).